Here is a 236-residue protein sequence, read N- to C-terminus: EF-hand domain-containing protein D1 (236 aa).

A disordered region spans residues 1–48 (MASEELASKLQRRLQWEEGDSGLQPAPGAAPDPEPQPQPPAWAPTARA). A compositionally biased stretch (pro residues) spans 28 to 42 (GAAPDPEPQPQPPAW). EF-hand domains follow at residues 87 to 122 (RLIKDLESMFKLYDAGRDGFIDLMELKLMMEKLGAP) and 123 to 158 (QTHLGLKSMIKEVDEDFDGKLSFREFLLIFHKAAAG). Ca(2+)-binding residues include D100, D104, E111, D136, D138, D140, K142, and E147.

It is found in the mitochondrion inner membrane. Acts as a calcium sensor for mitochondrial flash (mitoflash) activation, an event characterized by stochastic bursts of superoxide production. May play a role in neuronal differentiation. The sequence is that of EF-hand domain-containing protein D1 (EFHD1) from Bos taurus (Bovine).